A 350-amino-acid chain; its full sequence is Galactokinase (350 aa).

A substrate-binding site is contributed by 14 to 17 (EHTD). ATP-binding positions include S46 and 98–104 (GSGLSSS). The Mg(2+) site is built by S104 and E136. D148 acts as the Proton acceptor in catalysis. Y197 contributes to the substrate binding site.

The protein belongs to the GHMP kinase family. GalK subfamily.

It is found in the cytoplasm. It catalyses the reaction alpha-D-galactose + ATP = alpha-D-galactose 1-phosphate + ADP + H(+). Its pathway is carbohydrate metabolism; galactose metabolism. Functionally, catalyzes the transfer of the gamma-phosphate of ATP to D-galactose to form alpha-D-galactose-1-phosphate (Gal-1-P). This is Galactokinase from Thermococcus kodakarensis (strain ATCC BAA-918 / JCM 12380 / KOD1) (Pyrococcus kodakaraensis (strain KOD1)).